A 497-amino-acid polypeptide reads, in one-letter code: NAD(P)H-quinone oxidoreductase chain 4, chloroplastic (497 aa).

The next 14 helical transmembrane spans lie at 5-25, 36-56, 88-108, 112-132, 135-155, 168-188, 212-232, 243-263, 275-295, 306-326, 331-351, 387-407, 418-438, and 463-483; these read VPWL…IPIL, YTLG…YCHF, LGLV…AWPI, TRLF…LFVS, ILLF…LLCL, FVLY…TMSF, VLIY…FPFH, HYST…YGLI, FLLG…ASLI, IAYS…SFTE, GAIL…FLAG, LALP…GVVT, GITV…LSML, and LFIL…PNLI.

It belongs to the complex I subunit 4 family.

The protein localises to the plastid. The protein resides in the chloroplast thylakoid membrane. It carries out the reaction a plastoquinone + NADH + (n+1) H(+)(in) = a plastoquinol + NAD(+) + n H(+)(out). The enzyme catalyses a plastoquinone + NADPH + (n+1) H(+)(in) = a plastoquinol + NADP(+) + n H(+)(out). This chain is NAD(P)H-quinone oxidoreductase chain 4, chloroplastic, found in Adiantum capillus-veneris (Maidenhair fern).